The primary structure comprises 429 residues: Glutamate-1-semialdehyde 2,1-aminomutase 1 (429 aa).

K267 carries the post-translational modification N6-(pyridoxal phosphate)lysine.

This sequence belongs to the class-III pyridoxal-phosphate-dependent aminotransferase family. HemL subfamily. In terms of assembly, homodimer. Requires pyridoxal 5'-phosphate as cofactor.

Its subcellular location is the cytoplasm. The catalysed reaction is (S)-4-amino-5-oxopentanoate = 5-aminolevulinate. It functions in the pathway porphyrin-containing compound metabolism; protoporphyrin-IX biosynthesis; 5-aminolevulinate from L-glutamyl-tRNA(Glu): step 2/2. In Bacillus velezensis (strain DSM 23117 / BGSC 10A6 / LMG 26770 / FZB42) (Bacillus amyloliquefaciens subsp. plantarum), this protein is Glutamate-1-semialdehyde 2,1-aminomutase 1.